Consider the following 157-residue polypeptide: Phosphopantetheine adenylyltransferase (157 aa).

Ser8 contributes to the substrate binding site. ATP contacts are provided by residues 8–9 (SF) and His16. Positions 40, 72, and 86 each coordinate substrate. ATP contacts are provided by residues 87-89 (GLR), Glu97, and 122-128 (YSFLSSS).

Belongs to the bacterial CoaD family. In terms of assembly, homohexamer. It depends on Mg(2+) as a cofactor.

It localises to the cytoplasm. The catalysed reaction is (R)-4'-phosphopantetheine + ATP + H(+) = 3'-dephospho-CoA + diphosphate. It participates in cofactor biosynthesis; coenzyme A biosynthesis; CoA from (R)-pantothenate: step 4/5. In terms of biological role, reversibly transfers an adenylyl group from ATP to 4'-phosphopantetheine, yielding dephospho-CoA (dPCoA) and pyrophosphate. In Gloeothece citriformis (strain PCC 7424) (Cyanothece sp. (strain PCC 7424)), this protein is Phosphopantetheine adenylyltransferase.